The sequence spans 511 residues: Cobyric acid synthase (511 aa).

Residues 251 to 443 (LLDIAIICLP…IHGIFDNDIF (193 aa)) form the GATase cobBQ-type domain. Catalysis depends on Cys-332, which acts as the Nucleophile. His-435 is an active-site residue.

It belongs to the CobB/CobQ family. CobQ subfamily.

The protein operates within cofactor biosynthesis; adenosylcobalamin biosynthesis. Catalyzes amidations at positions B, D, E, and G on adenosylcobyrinic A,C-diamide. NH(2) groups are provided by glutamine, and one molecule of ATP is hydrogenolyzed for each amidation. This chain is Cobyric acid synthase, found in Listeria innocua serovar 6a (strain ATCC BAA-680 / CLIP 11262).